A 417-amino-acid polypeptide reads, in one-letter code: RH-like protein (417 aa).

The next 11 helical transmembrane spans lie at 12-32, 44-64, 77-97, 125-145, 172-192, 203-223, 238-258, 265-285, 287-307, 331-351, and 358-378; these read CLPL…FFFT, LVAS…GLGF, VAFN…LDGF, ISMN…MELV, IHVF…KPLP, TSPS…WPTF, VFST…VSSL, INMT…GASC, VIHS…ISFG, TFGL…ALRV, and MIGF…AMSI.

It belongs to the ammonium transporter (TC 2.A.49) family. Rh subfamily.

It localises to the membrane. Its function is as follows. May be part of an oligomeric complex which is likely to have a transport or channel function in the erythrocyte membrane. This is RH-like protein from Macaca fascicularis (Crab-eating macaque).